We begin with the raw amino-acid sequence, 331 residues long: 4-hydroxythreonine-4-phosphate dehydrogenase (331 aa).

Substrate is bound by residues His136 and Thr137. 3 residues coordinate a divalent metal cation: His166, His211, and His266. Residues Lys274, Asn283, and Arg292 each coordinate substrate.

Belongs to the PdxA family. Homodimer. Requires Zn(2+) as cofactor. The cofactor is Mg(2+). It depends on Co(2+) as a cofactor.

It is found in the cytoplasm. It carries out the reaction 4-(phosphooxy)-L-threonine + NAD(+) = 3-amino-2-oxopropyl phosphate + CO2 + NADH. It functions in the pathway cofactor biosynthesis; pyridoxine 5'-phosphate biosynthesis; pyridoxine 5'-phosphate from D-erythrose 4-phosphate: step 4/5. In terms of biological role, catalyzes the NAD(P)-dependent oxidation of 4-(phosphooxy)-L-threonine (HTP) into 2-amino-3-oxo-4-(phosphooxy)butyric acid which spontaneously decarboxylates to form 3-amino-2-oxopropyl phosphate (AHAP). The chain is 4-hydroxythreonine-4-phosphate dehydrogenase from Thioalkalivibrio sulfidiphilus (strain HL-EbGR7).